Reading from the N-terminus, the 514-residue chain is Uronyl 2-sulfotransferase homolog pip (514 aa).

Over 1-30 (MSLNAERSYKMKLRDVENAFKYRRIPYPKR) the chain is Cytoplasmic. A helical; Signal-anchor for type II membrane protein membrane pass occupies residues 31–50 (SVELIALLAISCTFFLFMHT). Residues 51–514 (NKLNSRLKEM…EQQNEYNEDY (464 aa)) lie on the Lumenal side of the membrane. Over residues 112 to 121 (HDRRSSEEQL) the composition is skewed to basic and acidic residues. Positions 112–185 (HDRRSSEEQL…DEDEVEENDD (74 aa)) are disordered. Residues 127 to 140 (HGHHHDHHSHHHHM) are compositionally biased toward basic residues. Residues 155–170 (HDKQLAVPDNKHKEDE) are compositionally biased toward basic and acidic residues. Positions 171-185 (VHYEDDEDEVEENDD) are enriched in acidic residues. N-linked (GlcNAc...) asparagine glycosylation is present at Asn-207. Residue His-282 is part of the active site. N-linked (GlcNAc...) asparagine glycans are attached at residues Asn-287, Asn-416, Asn-451, and Asn-467.

The protein belongs to the sulfotransferase 3 family. Interacts with wbl/windbeutel; the interaction is direct and does not require pip to be folded. In terms of tissue distribution, ovary-specific. Specifically expressed in the ventral follicle cells of stage 9-10 egg chambers. As to expression, expressed in ovaries. Specifically expressed in the ventral follicle cells of stage 9-10 egg chambers.

Its subcellular location is the golgi apparatus membrane. Its function is as follows. Sulfotransferase involved in dorsoventral axis patterning in early embryos. Required for the ventral activation of ea/easter by the protease snk in the perivitelline space between the embryonic membrane and the eggshell; activation of ea requires both activation of the ndl-gd-snk protease cascade and sulfation of a vitelline membrane component by pip. Probably acts by mediating the sulfation of some glycoprotein or glycosaminoglycan stably deposited in the vitelline membrane, whose ventrally localized modification leads to spatially restricted activation of the protease cascade resulting in localized activation of the spz Toll receptor ligand by ea. Functionally, probably required redundantly with isoform H for dorsoventral axis patterning in embryos. Lacks 2-O-sulfotransferase activity towards completely desulfated N-sulfated (CDSNS) heparin, chondroitin, and chondroitin sulfate A, B (dermatan sulfate), and C. Sulfates several components of the eggshell vitelline membrane, including Vml, Vm26Aa, Vm32E and psd/palisade/Fcp26Aa. In terms of biological role, probably required redundantly with isoform A for dorsoventral axis patterning in embryos. Lacks 2-O-sulfotransferase activity towards CDSNS heparin, chondroitin, and chondroitin sulfate A, B (dermatan sulfate), and C. The protein is Uronyl 2-sulfotransferase homolog pip of Drosophila melanogaster (Fruit fly).